A 592-amino-acid polypeptide reads, in one-letter code: Arginine--tRNA ligase (592 aa).

The 'HIGH' region signature appears at Ala-129–His-139.

It belongs to the class-I aminoacyl-tRNA synthetase family. As to quaternary structure, monomer.

The protein resides in the cytoplasm. It catalyses the reaction tRNA(Arg) + L-arginine + ATP = L-arginyl-tRNA(Arg) + AMP + diphosphate. The chain is Arginine--tRNA ligase from Dichelobacter nodosus (strain VCS1703A).